A 325-amino-acid chain; its full sequence is Acetyl-coenzyme A carboxylase carboxyl transferase subunit alpha (325 aa).

The region spanning 38 to 292 is the CoA carboxyltransferase C-terminal domain; sequence RLEERLSKLQ…DGILKETLKS (255 aa).

This sequence belongs to the AccA family. In terms of assembly, acetyl-CoA carboxylase is a heterohexamer composed of biotin carboxyl carrier protein (AccB), biotin carboxylase (AccC) and two subunits each of ACCase subunit alpha (AccA) and ACCase subunit beta (AccD).

It localises to the cytoplasm. The enzyme catalyses N(6)-carboxybiotinyl-L-lysyl-[protein] + acetyl-CoA = N(6)-biotinyl-L-lysyl-[protein] + malonyl-CoA. The protein operates within lipid metabolism; malonyl-CoA biosynthesis; malonyl-CoA from acetyl-CoA: step 1/1. Its function is as follows. Component of the acetyl coenzyme A carboxylase (ACC) complex. First, biotin carboxylase catalyzes the carboxylation of biotin on its carrier protein (BCCP) and then the CO(2) group is transferred by the carboxyltransferase to acetyl-CoA to form malonyl-CoA. This chain is Acetyl-coenzyme A carboxylase carboxyl transferase subunit alpha, found in Bacillus velezensis (strain DSM 23117 / BGSC 10A6 / LMG 26770 / FZB42) (Bacillus amyloliquefaciens subsp. plantarum).